The sequence spans 77 residues: Translation initiation factor IF-1, chloroplastic (77 aa).

The S1-like domain occupies 1 to 71; that stretch reads MKEQKWIHEG…TRGRIIYRLR (71 aa).

This sequence belongs to the IF-1 family. Component of the 30S ribosomal translation pre-initiation complex which assembles on the 30S ribosome in the order IF-2 and IF-3, IF-1 and N-formylmethionyl-tRNA(fMet); mRNA recruitment can occur at any time during PIC assembly.

The protein resides in the plastid. It is found in the chloroplast. One of the essential components for the initiation of protein synthesis. Stabilizes the binding of IF-2 and IF-3 on the 30S subunit to which N-formylmethionyl-tRNA(fMet) subsequently binds. Helps modulate mRNA selection, yielding the 30S pre-initiation complex (PIC). Upon addition of the 50S ribosomal subunit IF-1, IF-2 and IF-3 are released leaving the mature 70S translation initiation complex. This chain is Translation initiation factor IF-1, chloroplastic, found in Lactuca sativa (Garden lettuce).